The primary structure comprises 280 residues: F-box only protein 27 (280 aa).

The 48-residue stretch at 20 to 67 (VLDLSRLPPELLLLVLSHVPPRTLLMHCRRVCRAWRALVDGQALWLLL) folds into the F-box domain. The FBA domain occupies 101-277 (FCALRPLGRN…VTNSSVIIRV (177 aa)).

Part of a SCF (SKP1-cullin-F-box) protein ligase complex. Interacts with SKP1 and CUL1. Detected in brain, heart and muscle.

Functionally, substrate-recognition component of the SCF (SKP1-CUL1-F-box protein)-type E3 ubiquitin ligase complex. Able to recognize and bind complex-type oligosaccharides. The polypeptide is F-box only protein 27 (Fbxo27) (Mus musculus (Mouse)).